A 423-amino-acid chain; its full sequence is Ornithine cyclodeaminase (423 aa).

Positions 241, 242, 320, 352, 353, 354, 355, 373, 396, and 397 each coordinate NAD(+).

It belongs to the AgrE/ArgZ ornithine cyclodeaminase family. It depends on NAD(+) as a cofactor.

It catalyses the reaction L-ornithine = L-proline + NH4(+). Functionally, catalyzes the conversion of ornithine to proline, with the release of ammonia. The polypeptide is Ornithine cyclodeaminase (Methanocaldococcus jannaschii (strain ATCC 43067 / DSM 2661 / JAL-1 / JCM 10045 / NBRC 100440) (Methanococcus jannaschii)).